The primary structure comprises 96 residues: Co-chaperonin GroES (96 aa).

This sequence belongs to the GroES chaperonin family. As to quaternary structure, heptamer of 7 subunits arranged in a ring. Interacts with the chaperonin GroEL.

Its subcellular location is the cytoplasm. Its function is as follows. Together with the chaperonin GroEL, plays an essential role in assisting protein folding. The GroEL-GroES system forms a nano-cage that allows encapsulation of the non-native substrate proteins and provides a physical environment optimized to promote and accelerate protein folding. GroES binds to the apical surface of the GroEL ring, thereby capping the opening of the GroEL channel. In Aggregatibacter actinomycetemcomitans (Actinobacillus actinomycetemcomitans), this protein is Co-chaperonin GroES.